The sequence spans 287 residues: Mitochondrial glycine transporter B (287 aa).

Solcar repeat units lie at residues H7–H97, P104–A188, and I198–R282. The next 6 membrane-spanning stretches (helical) occupy residues F13–Q38, G72–Y98, V110–E135, G163–K186, V202–M228, and G257–V275.

Belongs to the mitochondrial carrier (TC 2.A.29) family. SLC25A38 subfamily. In terms of tissue distribution, at 24 hours post-fertilization, expressed predominantly in posterior blood island, posterior cardinal vein and circulating blood. At 34 hours post-fertilization, becomes restricted to posterior blood island and circulating blood.

It localises to the mitochondrion inner membrane. It catalyses the reaction glycine(in) = glycine(out). Mitochondrial glycine transporter that imports glycine into the mitochondrial matrix. Plays an important role in providing glycine for the first enzymatic step in heme biosynthesis, the condensation of glycine with succinyl-CoA to produce 5-aminolevulinate (ALA) in the mitochondrial matrix. Required during erythropoiesis. In terms of biological role, may play a role as pro-apoptotic protein that induces caspase-dependent apoptosis. The polypeptide is Mitochondrial glycine transporter B (slc25a38b) (Danio rerio (Zebrafish)).